The sequence spans 87 residues: Small ribosomal subunit protein bS20 (87 aa).

A disordered region spans residues Met1–Gln22.

Belongs to the bacterial ribosomal protein bS20 family.

Functionally, binds directly to 16S ribosomal RNA. In Corynebacterium glutamicum (strain R), this protein is Small ribosomal subunit protein bS20.